The chain runs to 950 residues: Defective chorion protein, FC106 isoform (950 aa).

Residues 1 to 19 (MRLFSLLPLLALLVVQAAG) form the signal peptide. 3 disordered regions span residues 23–60 (VTSD…PSIN), 184–212 (APAP…PDAP), and 268–294 (PAQP…EDPY). A compositionally biased stretch (polar residues) spans 32-41 (AGSTTNSTTD). Positions 268 to 280 (PAQPAAAGTDAQA) are enriched in low complexity. Tandem repeats lie at residues 493-518 (QNPM…QQIQ), 519-544 (QNPM…QQIQ), 545-570 (QNPM…QQIQ), 571-596 (QNPM…QQIQ), and 597-622 (QNPM…QQIQ). The interval 493-788 (QNPMMMQQRQ…IQQQQRQMMQ (296 aa)) is 12 X 26 AA approximate tandem repeats, Glu, Met-rich. One copy of the 6; approximate repeat lies at 623–652 (QNPMMMQQRQWSEEQAKIQHDQQMAQQMAQ). Residues 653–680 (QGLMMTEQRQRQWSEDQAKIQQAQQMAQ) form a 7; approximate repeat. The 8; approximate repeat unit spans residues 681–696 (QTPMMMPQMQQRQWTE). One copy of the 9; approximate repeat lies at 697–720 (DPQMVQQMQQRQWAEDQTRMQMAQ). The 10; approximate repeat unit spans residues 721–733 (QNPMMQQQRQMAE). An 11; approximate repeat occupies 734–758 (NPQMMQQRQWSEEQTKIEQAQQMAQ). The 12; approximate repeat unit spans residues 759 to 788 (QNQMMMQQMQQRQWSEDQAQIQQQQRQMMQ). The interval 843–875 (GPQMPENEGTARHKVDALGVGGNKRKKSKSKSA) is disordered.

Proteolytic cleavage of isoform FC106 generates 2 further products, S80 and S60.

Its subcellular location is the secreted. Required for proper assembly of the eggshell. In Drosophila melanogaster (Fruit fly), this protein is Defective chorion protein, FC106 isoform.